Here is a 124-residue protein sequence, read N- to C-terminus: MPAKQTSGKGAKKAGKAKGRPSGASKTRRRKRKESYGIYIYKVLKQVHPDTGISSKAMSIMNSFVNDVFERIAGEASRLSQYNKKSTISSREVQTAVRLLLPGELAKHAVSEGTKAVTKYTTSK.

A disordered region spans residues 1-32 (MPAKQTSGKGAKKAGKAKGRPSGASKTRRRKR). Basic residues predominate over residues 10–19 (GAKKAGKAKG). O-linked (GlcNAc) serine glycosylation occurs at Ser111. A Glycyl lysine isopeptide (Lys-Gly) (interchain with G-Cter in ubiquitin) cross-link involves residue Lys119.

This sequence belongs to the histone H2B family. The nucleosome is a histone octamer containing two molecules each of H2A, H2B, H3 and H4 assembled in one H3-H4 heterotetramer and two H2A-H2B heterodimers. The octamer wraps approximately 147 bp of DNA. Post-translationally, monoubiquitination of Lys-119 gives a specific tag for epigenetic transcriptional activation and is also prerequisite for histone H3 'Lys-4' and 'Lys-79' methylation. GlcNAcylation at Ser-111 promotes monoubiquitination of Lys-119. It fluctuates in response to extracellular glucose, and associates with transcribed genes.

Its subcellular location is the nucleus. It is found in the chromosome. Functionally, core component of nucleosome. Nucleosomes wrap and compact DNA into chromatin, limiting DNA accessibility to the cellular machineries which require DNA as a template. Histones thereby play a central role in transcription regulation, DNA repair, DNA replication and chromosomal stability. DNA accessibility is regulated via a complex set of post-translational modifications of histones, also called histone code, and nucleosome remodeling. The protein is Late histone H2B.2.2 of Psammechinus miliaris (Green sea urchin).